The primary structure comprises 179 residues: Nucleoside-triphosphatase THEP1 (179 aa).

Residues 7–14 (GMPGVGKT) and 98–105 (IIIIDEIG) each bind ATP.

The protein belongs to the THEP1 NTPase family.

The catalysed reaction is a ribonucleoside 5'-triphosphate + H2O = a ribonucleoside 5'-diphosphate + phosphate + H(+). Has nucleotide phosphatase activity towards ATP, GTP, CTP, TTP and UTP. May hydrolyze nucleoside diphosphates with lower efficiency. This is Nucleoside-triphosphatase THEP1 from Pyrococcus abyssi (strain GE5 / Orsay).